The following is a 236-amino-acid chain: Small ribosomal subunit protein uS2c (236 aa).

The protein belongs to the universal ribosomal protein uS2 family.

It localises to the plastid. Its subcellular location is the chloroplast. In Acorus calamus var. americanus (American sweet flag), this protein is Small ribosomal subunit protein uS2c (rps2).